An 874-amino-acid polypeptide reads, in one-letter code: Alanine--tRNA ligase (874 aa).

Residues His562, His566, Cys665, and His669 each coordinate Zn(2+).

The protein belongs to the class-II aminoacyl-tRNA synthetase family. Requires Zn(2+) as cofactor.

The protein localises to the cytoplasm. The enzyme catalyses tRNA(Ala) + L-alanine + ATP = L-alanyl-tRNA(Ala) + AMP + diphosphate. In terms of biological role, catalyzes the attachment of alanine to tRNA(Ala) in a two-step reaction: alanine is first activated by ATP to form Ala-AMP and then transferred to the acceptor end of tRNA(Ala). Also edits incorrectly charged Ser-tRNA(Ala) and Gly-tRNA(Ala) via its editing domain. This chain is Alanine--tRNA ligase, found in Pseudomonas putida (strain W619).